We begin with the raw amino-acid sequence, 1097 residues long: DNA-directed RNA polymerase subunit beta (1097 aa).

Residues 1072 to 1097 (QDVNPRRSTPSRPTYESLGVADYDED) are disordered.

It belongs to the RNA polymerase beta chain family. As to quaternary structure, in cyanobacteria the RNAP catalytic core is composed of 2 alpha, 1 beta, 1 beta', 1 gamma and 1 omega subunit. When a sigma factor is associated with the core the holoenzyme is formed, which can initiate transcription.

The enzyme catalyses RNA(n) + a ribonucleoside 5'-triphosphate = RNA(n+1) + diphosphate. Its function is as follows. DNA-dependent RNA polymerase catalyzes the transcription of DNA into RNA using the four ribonucleoside triphosphates as substrates. The protein is DNA-directed RNA polymerase subunit beta of Synechococcus sp. (strain CC9902).